A 792-amino-acid polypeptide reads, in one-letter code: MAMNENAYPTTFPSFERENHRDALRQPFDPAFRRTWSNGVALRQLVDFARPTVANHTMSYALIEYCLSRLPMQHLERLGQLKIPVELHAAPFQYLQKHHRACGFDWVERFVWRTHDLHKPYNFLRPELLLAQESGSQRIVALLTIMPGEDYIRHYASILEVAQHDGAISSHHGPIRCVLYPHLTQSMMAWTGLTELSLSVEPGDILILGFVAELLPRFASLVPTARVIGRQDAQYYGLVRLELRPGLVFSLIGAKYSYWGNLGGRVVRELAARRPRAICYIAKQGTLLSPGDIHRTIYSPTRYCVFDKGQACWHGDDHSALPINPLSSRFPTFDRGLHVSTPTIVEQDVDFRTQVEAHGASSVDNELAQMARALTDVHEENPSMERVQLLPLMFITDYLRRPEELGMTVPFDLTSRNETVHRNKELFLARSAHLVLEAFNVIERPKAIIVGTGYGVKTILPALQRRGVEVVGLCGGRDRAKTEAAGNKHGIPCIDVSLAEVQATHGANLLFVASPHDKHAALVQEALDLGGFDIVCEKPLALDMATMRHFANQSQGSSQLRLMNHPLRFYPPLIQLKAASKEPSNILAIDIQYLTRRLSKLTHWSAGFSKAAGGGMMLAMATHFLDLIEWLTSSSLTPASVQDMSTSNSIGPLPTEDAGATKTPDVESAFQMNGCCGLSTKYSVDCDGAADTELFSVTLRLDNEHELRFIQRKGSPVLLEQRLPGREWLPLKVHWEQRVREGSPWQISFQYFAEELVEAICMGTRSAFADKATGFSDYARQVGVFGSKVGIA.

In terms of assembly, interacts with cns2.

It localises to the lipid droplet. It functions in the pathway secondary metabolite biosynthesis. Its function is as follows. Oxidoreductase; part of the gene cluster that mediates the biosynthesis of cordycepin (COR) and pentostatin (PTN), two adenosine analogs with related bioactivity profiles as both mimic adenosine and can inhibit some of the processes that are adenosine dependent. Within the pathway, cns1 catalyzes the last step by converting the cns2 product 2'-carbonyl-3'-deoxyadenosine (2'-C-3'-dA) into cordycepin (3'-deoxyadenosine). The first step of cordycepin biosynthesis involves hydroxyl phosphorylation of the 3'-OH position on adenosine to produce adenosine-3'-monophosphate (3'-AMP), catalyzed by kinase activity of cns3. Next, 3'-AMP is dephosphorylated to 2'-carbonyl-3'-deoxyadenosine by cns2, which is finally converted to cordycepin by the oxidoreductase cns1. Pentostatin production is mediated by the ATP phosphoribosyltransferase activity of cns3 on adenosine to inhibit the activity of adenosine deaminase (ADA) to prevent COR deamination to 3'-deoxyinosine (3'-dI). This is Oxidoreductase cns1 from Cordyceps militaris (strain CM01) (Caterpillar fungus).